Reading from the N-terminus, the 142-residue chain is Holo-[acyl-carrier-protein] synthase (142 aa).

2 residues coordinate Mg(2+): D8 and E57.

The protein belongs to the P-Pant transferase superfamily. AcpS family. It depends on Mg(2+) as a cofactor.

The protein resides in the cytoplasm. The catalysed reaction is apo-[ACP] + CoA = holo-[ACP] + adenosine 3',5'-bisphosphate + H(+). Its function is as follows. Transfers the 4'-phosphopantetheine moiety from coenzyme A to a Ser of acyl-carrier-protein. This chain is Holo-[acyl-carrier-protein] synthase, found in Ruegeria sp. (strain TM1040) (Silicibacter sp.).